The chain runs to 369 residues: Probable dual-specificity RNA methyltransferase RlmN (369 aa).

The Proton acceptor role is filled by Glu-108. One can recognise a Radical SAM core domain in the interval 114–357; the sequence is YPDRATVCIS…CTVRDTRGQE (244 aa). Cys-121 and Cys-362 are oxidised to a cystine. Residues Cys-128, Cys-132, and Cys-135 each coordinate [4Fe-4S] cluster. Residues 183 to 184, Ser-217, 240 to 242, and Asn-319 each bind S-adenosyl-L-methionine; these read GE and SLH. Catalysis depends on Cys-362, which acts as the S-methylcysteine intermediate.

It belongs to the radical SAM superfamily. RlmN family. The cofactor is [4Fe-4S] cluster.

It is found in the cytoplasm. It carries out the reaction adenosine(2503) in 23S rRNA + 2 reduced [2Fe-2S]-[ferredoxin] + 2 S-adenosyl-L-methionine = 2-methyladenosine(2503) in 23S rRNA + 5'-deoxyadenosine + L-methionine + 2 oxidized [2Fe-2S]-[ferredoxin] + S-adenosyl-L-homocysteine. The enzyme catalyses adenosine(37) in tRNA + 2 reduced [2Fe-2S]-[ferredoxin] + 2 S-adenosyl-L-methionine = 2-methyladenosine(37) in tRNA + 5'-deoxyadenosine + L-methionine + 2 oxidized [2Fe-2S]-[ferredoxin] + S-adenosyl-L-homocysteine. In terms of biological role, specifically methylates position 2 of adenine 2503 in 23S rRNA and position 2 of adenine 37 in tRNAs. This Saccharopolyspora erythraea (strain ATCC 11635 / DSM 40517 / JCM 4748 / NBRC 13426 / NCIMB 8594 / NRRL 2338) protein is Probable dual-specificity RNA methyltransferase RlmN.